We begin with the raw amino-acid sequence, 156 residues long: MALEKSLALLPLLVLVLLVLGWVQPSLGKESRAKKFQRQHMDSDGSLSSNPTYCNNMMRRRNMTQGWCKPVNTFVHEPLVDVQDVCFQENVTCKNGQANCYKSSSSMHITDCRLTSGSRYPNCAYQTSQKERHIIVACEGNPYVPVHFDASVEDST.

The N-terminal stretch at 1-28 (MALEKSLALLPLLVLVLLVLGWVQPSLG) is a signal peptide. Substrate is bound by residues K35 and R38. Catalysis depends on H40, which acts as the Proton acceptor. 4 disulfides stabilise this stretch: C54–C112, C68–C123, C86–C138, and C93–C100. Residue N62 is glycosylated (N-linked (GlcNAc...) asparagine). 69–73 (KPVNT) is a substrate binding site. N-linked (GlcNAc...) asparagine glycosylation is present at N90. Residues K94 and R113 each contribute to the substrate site. The active-site Proton donor is the H147.

It belongs to the pancreatic ribonuclease family. As to quaternary structure, monomer. Interacts with and forms tight 1:1 complexes with RNH1. Dimerization of two such complexes may occur. Interaction with RNH1 inhibits this protein.

The protein localises to the secreted. It carries out the reaction an [RNA] containing cytidine + H2O = an [RNA]-3'-cytidine-3'-phosphate + a 5'-hydroxy-ribonucleotide-3'-[RNA].. The catalysed reaction is an [RNA] containing uridine + H2O = an [RNA]-3'-uridine-3'-phosphate + a 5'-hydroxy-ribonucleotide-3'-[RNA].. Endonuclease that catalyzes the cleavage of RNA on the 3' side of pyrimidine nucleotides. Acts on single-stranded and double-stranded RNA. The polypeptide is Ribonuclease pancreatic (RNASE1) (Lagothrix lagotricha (Brown woolly monkey)).